The primary structure comprises 165 residues: MIIEGPVIKFGDKIDTDIIIPARYLKYTDPQYLAQHAMEPLDPEFYKKASKGVIIVAGKVFGMGSSREQAAIALKAAGVKAVVAESFARIFYRNAINNGLPVITLPNSTKEIDESSYVKIDVETGEILVGNKVLKGKGITGMALEILQAGGIMEYLKKMQTVNRN.

Belongs to the LeuD family. LeuD type 2 subfamily. In terms of assembly, heterodimer of LeuC and LeuD.

The enzyme catalyses (2R,3S)-3-isopropylmalate = (2S)-2-isopropylmalate. Its pathway is amino-acid biosynthesis; L-leucine biosynthesis; L-leucine from 3-methyl-2-oxobutanoate: step 2/4. Catalyzes the isomerization between 2-isopropylmalate and 3-isopropylmalate, via the formation of 2-isopropylmaleate. This Saccharolobus islandicus (strain M.16.27) (Sulfolobus islandicus) protein is 3-isopropylmalate dehydratase small subunit.